The following is a 360-amino-acid chain: D-alanine--D-alanine ligase (360 aa).

Positions 139 to 344 constitute an ATP-grasp domain; the sequence is KDVFAQAGLA…YPELIEKLVS (206 aa). 172–227 is a binding site for ATP; that stretch reads EQVLGYPCFVKPANMGSSVGISKCRSKEELQTAFDLAFQYDRRVVVEEGVVGREIE. Positions 298, 311, and 313 each coordinate Mg(2+).

This sequence belongs to the D-alanine--D-alanine ligase family. Mg(2+) serves as cofactor. Mn(2+) is required as a cofactor.

The protein resides in the cytoplasm. The catalysed reaction is 2 D-alanine + ATP = D-alanyl-D-alanine + ADP + phosphate + H(+). It participates in cell wall biogenesis; peptidoglycan biosynthesis. Functionally, cell wall formation. The chain is D-alanine--D-alanine ligase from Bacillus pumilus (strain SAFR-032).